Reading from the N-terminus, the 723-residue chain is Tripartite motif-containing protein 42 (723 aa).

An RING-type zinc finger spans residues 146-192 (CPMCNRLRLHSFMLPCNHSLCEKCLRQLQKHAEVTENFFILICPMCS). B box-type zinc fingers lie at residues 235 to 280 (PILC…FVDT) and 285 to 326 (QDEK…TVSL). 4 residues coordinate Zn(2+): C290, H293, C313, and H318. Residues 382–412 (KLRAILQEKEKIIMEQIENLEVSRQKEIEKY) adopt a coiled-coil conformation. The 59-residue stretch at 434–492 (LKETGQVAFLQSAKILVDQIEEGIQNTFRPDPQLRLHSLHCIPLDFAELSNAIHELFPT) folds into the COS domain. One can recognise a Fibronectin type-III domain in the interval 603–701 (TPGPIVIYQT…DICKVVTPDG (99 aa)).

This sequence belongs to the TRIM/RBCC family.

The sequence is that of Tripartite motif-containing protein 42 (Trim42) from Mus musculus (Mouse).